A 370-amino-acid chain; its full sequence is Quinolinate synthase (370 aa).

Iminosuccinate contacts are provided by histidine 62 and serine 83. Residue cysteine 128 participates in [4Fe-4S] cluster binding. Iminosuccinate is bound by residues tyrosine 154 to asparagine 156 and serine 171. Cysteine 215 contacts [4Fe-4S] cluster. Iminosuccinate contacts are provided by residues histidine 241–glutamate 243 and threonine 258. Cysteine 312 is a binding site for [4Fe-4S] cluster.

This sequence belongs to the quinolinate synthase family. Type 1 subfamily. It depends on [4Fe-4S] cluster as a cofactor.

The protein resides in the cytoplasm. The catalysed reaction is iminosuccinate + dihydroxyacetone phosphate = quinolinate + phosphate + 2 H2O + H(+). The protein operates within cofactor biosynthesis; NAD(+) biosynthesis; quinolinate from iminoaspartate: step 1/1. Its function is as follows. Catalyzes the condensation of iminoaspartate with dihydroxyacetone phosphate to form quinolinate. This is Quinolinate synthase from Neisseria meningitidis serogroup C / serotype 2a (strain ATCC 700532 / DSM 15464 / FAM18).